A 411-amino-acid chain; its full sequence is Serine/threonine transporter SstT (411 aa).

8 helical membrane-spanning segments follow: residues 17–37 (IMVG…TASA), 41–61 (LGAL…LVLV), 79–99 (ILFL…VVSF), 138–158 (ALIS…GLAL), 189–209 (LGIF…ALWG), 214–234 (LVVL…LIVF), 295–315 (MAGA…TLGI), and 327–347 (VVAA…LLLI).

It belongs to the dicarboxylate/amino acid:cation symporter (DAACS) (TC 2.A.23) family.

It is found in the cell inner membrane. It carries out the reaction L-serine(in) + Na(+)(in) = L-serine(out) + Na(+)(out). It catalyses the reaction L-threonine(in) + Na(+)(in) = L-threonine(out) + Na(+)(out). Involved in the import of serine and threonine into the cell, with the concomitant import of sodium (symport system). The sequence is that of Serine/threonine transporter SstT from Serratia proteamaculans (strain 568).